We begin with the raw amino-acid sequence, 488 residues long: Fumarate hydratase, mitochondrial (488 aa).

The N-terminal 24 residues, 1–24 (MLRFTNCSCKTFVKSSYKLNIRRM), are a transit peptide targeting the mitochondrion. Residues 124–126 (SGT), 154–157 (HPNN), 164–166 (SSN), and Thr212 each bind substrate. Catalysis depends on His213, which acts as the Proton donor/acceptor. Ser343 is an active-site residue. Substrate is bound by residues Ser344 and 349–351 (KVN). Position 428 is a phosphothreonine (Thr428).

The protein belongs to the class-II fumarase/aspartase family. Fumarase subfamily. As to quaternary structure, homotetramer.

The protein localises to the mitochondrion matrix. It is found in the cytoplasm. It localises to the nucleus. It catalyses the reaction (S)-malate = fumarate + H2O. It participates in carbohydrate metabolism; tricarboxylic acid cycle; (S)-malate from fumarate: step 1/1. Functionally, catalyzes the reversible stereospecific interconversion of fumarate to L-malate. In mitochondrion, catalyzes the hydration of fumarate to L-malate in the tricarboxylic acid (TCA) cycle to facilitate a transition step in the production of energy in the form of NADH. In cytoplasm and nucleus, involved in DNA repair in response to DNA damage: following DNA double-strand breaks (DSBs), translocates from the cytosol to the nucleus and promotes DNA repair by catalyzing the dehydration of L-malate to fumarate. This is Fumarate hydratase, mitochondrial from Saccharomyces cerevisiae (strain ATCC 204508 / S288c) (Baker's yeast).